Here is a 465-residue protein sequence, read N- to C-terminus: Pancreatic triacylglycerol lipase (465 aa).

The first 16 residues, 1–16, serve as a signal peptide directing secretion; it reads MLLLWILSLFLETVAG. Cystine bridges form between Cys20–Cys26 and Cys107–Cys118. Catalysis depends on Ser169, which acts as the Nucleophile. The active-site Charge relay system is Asp193. Ca(2+) contacts are provided by Glu204, Arg207, Asp209, and Asp212. Cys254 and Cys278 are oxidised to a cystine. Catalysis depends on His280, which acts as the Charge relay system. 2 disulfides stabilise this stretch: Cys302–Cys313 and Cys316–Cys321. 3 N-linked (GlcNAc...) asparagine glycosylation sites follow: Asn351, Asn398, and Asn425. The PLAT domain occupies 355–465; it reads WRYRIAVTLS…EEVLLTLQPC (111 aa). A disulfide bridge links Cys449 with Cys465.

It belongs to the AB hydrolase superfamily. Lipase family. As to quaternary structure, forms a 1:1 stoichiometric complex with (pro)colipase/CLPS.

It is found in the secreted. It catalyses the reaction a triacylglycerol + H2O = a diacylglycerol + a fatty acid + H(+). The enzyme catalyses 1,2,3-tributanoylglycerol + H2O = dibutanoylglycerol + butanoate + H(+). It carries out the reaction 1,2,3-tri-(9Z-octadecenoyl)-glycerol + H2O = di-(9Z)-octadecenoylglycerol + (9Z)-octadecenoate + H(+). The catalysed reaction is all-trans-retinyl hexadecanoate + H2O = all-trans-retinol + hexadecanoate + H(+). It catalyses the reaction 1,2-di-(9Z-octadecenoyl)-glycerol + H2O = (9Z-octadecenoyl)-glycerol + (9Z)-octadecenoate + H(+). Inhibited by bile salts, is reactivated by (pro)colipase/CLPS. Functionally, plays an important role in fat metabolism. It preferentially splits the esters of long-chain fatty acids at positions 1 and 3, producing mainly 2-monoacylglycerol and free fatty acids, and shows considerably higher activity against insoluble emulsified substrates than against soluble ones. The sequence is that of Pancreatic triacylglycerol lipase (PNLIP) from Cavia porcellus (Guinea pig).